Reading from the N-terminus, the 450-residue chain is Tripartite motif-containing protein 77 (450 aa).

The RING-type zinc finger occupies 15-56; it reads CSICTDYLTDPVTICCGHRFCSPCLCLLWEDTLTPNCCPVCR. The B box-type zinc finger occupies 88 to 131; the sequence is SAMLICRRHQEIKNLICETDRSLLCFLCSQSPRHATHKHYMTRE. Positions 93, 96, 115, and 121 each coordinate Zn(2+). Residues 269–450 form the B30.2/SPRY domain; sequence QLSAWTITGV…LRPFICHGSK (182 aa).

Belongs to the TRIM/RBCC family.

The polypeptide is Tripartite motif-containing protein 77 (TRIM77) (Homo sapiens (Human)).